A 454-amino-acid chain; its full sequence is Bifunctional protein GlmU (454 aa).

Positions 1-231 (MSRPTVSLIV…EAETLGVNTR (231 aa)) are pyrophosphorylase. UDP-N-acetyl-alpha-D-glucosamine contacts are provided by residues 11–14 (LAAG), K25, Q78, 83–84 (GT), 106–108 (YGD), G143, E157, N172, and N229. D108 contributes to the Mg(2+) binding site. Residue N229 participates in Mg(2+) binding. Residues 232-252 (AQLAAAEAEFQRRARAAALED) are linker. An N-acetyltransferase region spans residues 253-454 (GVTLTAPDTV…ARDASKKGTN (202 aa)). UDP-N-acetyl-alpha-D-glucosamine contacts are provided by R318 and K336. The active-site Proton acceptor is H348. Residues Y351 and N362 each coordinate UDP-N-acetyl-alpha-D-glucosamine. Residues A365, 371 to 372 (NY), S390, S408, and R425 each bind acetyl-CoA.

The protein in the N-terminal section; belongs to the N-acetylglucosamine-1-phosphate uridyltransferase family. It in the C-terminal section; belongs to the transferase hexapeptide repeat family. In terms of assembly, homotrimer. Mg(2+) serves as cofactor.

The protein localises to the cytoplasm. The enzyme catalyses alpha-D-glucosamine 1-phosphate + acetyl-CoA = N-acetyl-alpha-D-glucosamine 1-phosphate + CoA + H(+). It catalyses the reaction N-acetyl-alpha-D-glucosamine 1-phosphate + UTP + H(+) = UDP-N-acetyl-alpha-D-glucosamine + diphosphate. Its pathway is nucleotide-sugar biosynthesis; UDP-N-acetyl-alpha-D-glucosamine biosynthesis; N-acetyl-alpha-D-glucosamine 1-phosphate from alpha-D-glucosamine 6-phosphate (route II): step 2/2. The protein operates within nucleotide-sugar biosynthesis; UDP-N-acetyl-alpha-D-glucosamine biosynthesis; UDP-N-acetyl-alpha-D-glucosamine from N-acetyl-alpha-D-glucosamine 1-phosphate: step 1/1. It participates in bacterial outer membrane biogenesis; LPS lipid A biosynthesis. Catalyzes the last two sequential reactions in the de novo biosynthetic pathway for UDP-N-acetylglucosamine (UDP-GlcNAc). The C-terminal domain catalyzes the transfer of acetyl group from acetyl coenzyme A to glucosamine-1-phosphate (GlcN-1-P) to produce N-acetylglucosamine-1-phosphate (GlcNAc-1-P), which is converted into UDP-GlcNAc by the transfer of uridine 5-monophosphate (from uridine 5-triphosphate), a reaction catalyzed by the N-terminal domain. The protein is Bifunctional protein GlmU of Cereibacter sphaeroides (strain ATCC 17025 / ATH 2.4.3) (Rhodobacter sphaeroides).